The primary structure comprises 400 residues: Nicotinate phosphoribosyltransferase (400 aa).

His-220 carries the phosphohistidine; by autocatalysis modification.

Belongs to the NAPRTase family. In terms of processing, transiently phosphorylated on a His residue during the reaction cycle. Phosphorylation strongly increases the affinity for substrates and increases the rate of nicotinate D-ribonucleotide production. Dephosphorylation regenerates the low-affinity form of the enzyme, leading to product release.

The catalysed reaction is nicotinate + 5-phospho-alpha-D-ribose 1-diphosphate + ATP + H2O = nicotinate beta-D-ribonucleotide + ADP + phosphate + diphosphate. The protein operates within cofactor biosynthesis; NAD(+) biosynthesis; nicotinate D-ribonucleotide from nicotinate: step 1/1. Functionally, catalyzes the synthesis of beta-nicotinate D-ribonucleotide from nicotinate and 5-phospho-D-ribose 1-phosphate at the expense of ATP. The protein is Nicotinate phosphoribosyltransferase of Escherichia coli O157:H7.